The sequence spans 337 residues: Glyceraldehyde-3-phosphate dehydrogenase (337 aa).

Residues 17 to 18, aspartate 39, lysine 83, and serine 125 contribute to the NAD(+) site; that span reads RI. D-glyceraldehyde 3-phosphate is bound by residues 156-158, threonine 187, arginine 202, 215-216, and arginine 238; these read SCT and TG. The Nucleophile role is filled by cysteine 157. Residue asparagine 319 coordinates NAD(+).

Belongs to the glyceraldehyde-3-phosphate dehydrogenase family. In terms of assembly, homotetramer.

Its subcellular location is the cytoplasm. It carries out the reaction D-glyceraldehyde 3-phosphate + phosphate + NAD(+) = (2R)-3-phospho-glyceroyl phosphate + NADH + H(+). It functions in the pathway carbohydrate degradation; glycolysis; pyruvate from D-glyceraldehyde 3-phosphate: step 1/5. Catalyzes the oxidative phosphorylation of glyceraldehyde 3-phosphate (G3P) to 1,3-bisphosphoglycerate (BPG) using the cofactor NAD. The first reaction step involves the formation of a hemiacetal intermediate between G3P and a cysteine residue, and this hemiacetal intermediate is then oxidized to a thioester, with concomitant reduction of NAD to NADH. The reduced NADH is then exchanged with the second NAD, and the thioester is attacked by a nucleophilic inorganic phosphate to produce BPG. This is Glyceraldehyde-3-phosphate dehydrogenase (gapA) from Mycoplasma genitalium (strain ATCC 33530 / DSM 19775 / NCTC 10195 / G37) (Mycoplasmoides genitalium).